The primary structure comprises 290 residues: 4-hydroxy-tetrahydrodipicolinate synthase (290 aa).

Threonine 46 contacts pyruvate. The active-site Proton donor/acceptor is the tyrosine 134. The active-site Schiff-base intermediate with substrate is lysine 163. Valine 205 is a pyruvate binding site.

Belongs to the DapA family. Homotetramer; dimer of dimers.

Its subcellular location is the cytoplasm. It catalyses the reaction L-aspartate 4-semialdehyde + pyruvate = (2S,4S)-4-hydroxy-2,3,4,5-tetrahydrodipicolinate + H2O + H(+). It functions in the pathway amino-acid biosynthesis; L-lysine biosynthesis via DAP pathway; (S)-tetrahydrodipicolinate from L-aspartate: step 3/4. Catalyzes the condensation of (S)-aspartate-beta-semialdehyde [(S)-ASA] and pyruvate to 4-hydroxy-tetrahydrodipicolinate (HTPA). This Bacillus subtilis (strain 168) protein is 4-hydroxy-tetrahydrodipicolinate synthase.